Consider the following 147-residue polypeptide: MKHLIRRLSRVADSSSEFSIRRSTSSFRNRRGHHRLHAPPPPWSICPARRVNTVPAGHVPVYVGEEMERFVVSAELMNHPIFVGLLNRSAQEYGYAQKGVLHIPCHVIVFERVVETLRLGGFEGSGDLENLVASLLSGDELIPETTE.

The protein belongs to the ARG7 family. In terms of tissue distribution, specifically expressed in the quiescent center and cortex or endodermis initials of root stem niches. Expressed in vascular tissues from hypocotyls, petioles and cotyledons.

It localises to the cytoplasm. Its function is as follows. Plays a role in the regulation of cell expansion, root meristem patterning and auxin transport. This chain is Auxin-responsive protein SAUR41, found in Arabidopsis thaliana (Mouse-ear cress).